A 179-amino-acid polypeptide reads, in one-letter code: IMPACT family member in pol 5'region (179 aa).

This sequence belongs to the IMPACT family.

The protein is IMPACT family member in pol 5'region of Thermus thermophilus.